The primary structure comprises 123 residues: Histone H2B.3 (123 aa).

The interval 1–30 is disordered; it reads MPPKVSGKAAKKAGKAQKNISKGDKKKNRK. Ser-110 carries an O-linked (GlcNAc) serine glycan. Lys-118 is covalently cross-linked (Glycyl lysine isopeptide (Lys-Gly) (interchain with G-Cter in ubiquitin)).

Belongs to the histone H2B family. In terms of assembly, the nucleosome is a histone octamer containing two molecules each of H2A, H2B, H3 and H4 assembled in one H3-H4 heterotetramer and two H2A-H2B heterodimers. The octamer wraps approximately 147 bp of DNA. Monoubiquitination of Lys-118 gives a specific tag for epigenetic transcriptional activation and is also prerequisite for histone H3 'Lys-4' and 'Lys-79' methylation. In terms of processing, glcNAcylation at Ser-110 promotes monoubiquitination of Lys-118. It fluctuates in response to extracellular glucose, and associates with transcribed genes.

It is found in the nucleus. The protein localises to the chromosome. Its function is as follows. Core component of nucleosome. Nucleosomes wrap and compact DNA into chromatin, limiting DNA accessibility to the cellular machineries which require DNA as a template. Histones thereby play a central role in transcription regulation, DNA repair, DNA replication and chromosomal stability. DNA accessibility is regulated via a complex set of post-translational modifications of histones, also called histone code, and nucleosome remodeling. The protein is Histone H2B.3 of Tigriopus californicus (Marine copepod).